The chain runs to 462 residues: DEK domain-containing chromatin-associated protein 1 (462 aa).

Disordered stretches follow at residues 18-91 (AVTE…TQGR) and 212-390 (KETK…RKEL). The span at 20 to 32 (TEKDTETKKKDEV) shows a compositional bias: basic and acidic residues. Positions 33–46 (EKDEAMEEKGEEID) are enriched in acidic residues. Polar residues predominate over residues 77-91 (PRSSGNKPLSITQGR). A compositionally biased stretch (acidic residues) spans 267 to 276 (NGEDDVAPEE). Composition is skewed to basic and acidic residues over residues 277-303 (ENNK…TDKK), 312-322 (EKPAAEEEKSI), and 347-360 (QKVD…EKGK). Residues 344–351 (SKKQKVDK) carry the Nuclear localization signal motif. Positions 384–439 (EPTRKELHVVVTKILKEVDFNTATLSDILRKLGSHFGIDLMHRKAEVKDIITDAIN) constitute a DEK-C domain. DNA-binding regions lie at residues 402-416 (DFNT…RKLG) and 431-435 (KDIIT). The segment at 438 to 462 (INEMSDDDDEKEEDTEDEGEKEGKD) is disordered. Positions 441–462 (MSDDDDEKEEDTEDEGEKEGKD) are enriched in acidic residues.

Found in a mRNA splicing-dependent exon junction complex (EJC). Binds specifically histones H3 and H4.

The protein resides in the nucleus. It is found in the nucleolus. Chromatin-associated protein which contributes to the modulation of chromatin structure (such as super-helical structure of DNA) and function. Binds to chromatin of protein-coding genes throughout the genome to regulate nucleosome occupancy and chromatin accessibility, and to modulate the expression of target genes. In Arabidopsis thaliana (Mouse-ear cress), this protein is DEK domain-containing chromatin-associated protein 1.